The sequence spans 115 residues: Cyclin-dependent protein kinase inhibitor SMR3 (115 aa).

The span at 17–36 shows a compositional bias: basic and acidic residues; it reads KIRLPTRPELDIPDSDHEDP. Residues 17 to 82 form a disordered region; that stretch reads KIRLPTRPEL…RSSGTKRKLT (66 aa). Basic residues predominate over residues 67 to 81; the sequence is RKPKPNRSSGTKRKL.

As to quaternary structure, interacts with CDKA-1 and D-type cyclins. Expressed at low levels in roots and stems.

Its subcellular location is the nucleus. Its function is as follows. Probable cyclin-dependent protein kinase (CDK) inhibitor that functions as a repressor of mitosis in the endoreduplication cell cycle. The chain is Cyclin-dependent protein kinase inhibitor SMR3 from Arabidopsis thaliana (Mouse-ear cress).